A 492-amino-acid chain; its full sequence is RNase aCSPSF2 (492 aa).

A divalent metal cation contacts are provided by His130, His132, Asp134, His135, His213, Asp234, and His460.

It belongs to the metallo-beta-lactamase superfamily. RNA-metabolizing metallo-beta-lactamase-like family. Requires Mg(2+) as cofactor.

Functionally, a 5'-3' exoribonuclease, more active on 5'-monophosphorylated and 5'-hydroxylated RNA than 5'-tri-phosphorylated RNA; note there is no evidence for accumulation of 5'-monophosphorylated RNA in this organism. Translation initiation factor 2 subunit gamma but not subunit alpha protects 5'-tri-phosphorylated RNA from degradation by this enzyme. The sequence is that of RNase aCSPSF2 from Saccharolobus solfataricus (strain ATCC 35092 / DSM 1617 / JCM 11322 / P2) (Sulfolobus solfataricus).